The chain runs to 243 residues: Probable transcriptional regulatory protein TTE1135 (243 aa).

It belongs to the TACO1 family.

It is found in the cytoplasm. The protein is Probable transcriptional regulatory protein TTE1135 of Caldanaerobacter subterraneus subsp. tengcongensis (strain DSM 15242 / JCM 11007 / NBRC 100824 / MB4) (Thermoanaerobacter tengcongensis).